Here is a 201-residue protein sequence, read N- to C-terminus: Small ribosomal subunit protein uS4 (201 aa).

A disordered region spans residues 22-47; that stretch reads TGKELARRPYAPGDHGNDRRGKLSEY. Positions 93–153 constitute an S4 RNA-binding domain; the sequence is RRLDNMVYRL…EKSKNLDVIK (61 aa).

This sequence belongs to the universal ribosomal protein uS4 family. As to quaternary structure, part of the 30S ribosomal subunit. Contacts protein S5. The interaction surface between S4 and S5 is involved in control of translational fidelity.

In terms of biological role, one of the primary rRNA binding proteins, it binds directly to 16S rRNA where it nucleates assembly of the body of the 30S subunit. With S5 and S12 plays an important role in translational accuracy. The sequence is that of Small ribosomal subunit protein uS4 from Limosilactobacillus fermentum (strain NBRC 3956 / LMG 18251) (Lactobacillus fermentum).